Consider the following 323-residue polypeptide: MSEEKIHKIILVGDGAVGSTYAFSLVQQGIAQELGIVDIVKERTQGDAIDLADATPWIAPKTIYSAEYSDAKDADLVVISAGAPQKPGETRLDLVNKNLKILSSIVEPIVESGFNGIFLVAANPVDILTHATWRMSGFPKDRVIGSGTSLDTGRLQKVIGEMEHVDPRSVNAYMLGEHGDTEFPVWSYNNVGGVKVSDWVKAHPEVGENKLEAIHKEVADMAYDIINKKGATFYGIGTALAFITKAILNNEHRVLPLSVPMDGEYGLHDIHIGTPAVVGRHGLEQVIEMPLNADEQAKMEASAKQLKEVMDKAFKETGVKVRQ.

NAD(+)-binding positions include Val-17, Asp-38, Arg-43, Tyr-68, and 82–83 (GA). Substrate contacts are provided by Gln-85 and Arg-91. Residues Ser-104, 121–123 (AAN), and Ser-146 contribute to the NAD(+) site. 123–126 (NPVD) is a binding site for substrate. 151–154 (DTGR) lines the substrate pocket. His-178 acts as the Proton acceptor in catalysis. Tyr-223 is subject to Phosphotyrosine. Thr-232 contacts substrate.

The protein belongs to the LDH/MDH superfamily. LDH family. As to quaternary structure, homotetramer.

The protein resides in the cytoplasm. The catalysed reaction is (S)-lactate + NAD(+) = pyruvate + NADH + H(+). Its pathway is fermentation; pyruvate fermentation to lactate; (S)-lactate from pyruvate: step 1/1. Catalyzes the conversion of lactate to pyruvate. This chain is L-lactate dehydrogenase 1, found in Lactobacillus johnsonii (strain CNCM I-12250 / La1 / NCC 533).